Consider the following 280-residue polypeptide: Putative protein-tyrosine sulfotransferase (280 aa).

Residue 16-20 (RSGTT) coordinates 3'-phosphoadenylyl sulfate. Residues Cys-34 and Cys-89 are joined by a disulfide bond. The Proton donor/acceptor role is filled by Glu-37. Asn-57 is a glycosylation site (N-linked (GlcNAc...) asparagine). 3'-phosphoadenylyl sulfate contacts are provided by Arg-116, Ser-124, and Arg-128. The N-linked (GlcNAc...) asparagine glycan is linked to Asn-136. The cysteines at positions 158 and 165 are disulfide-linked. 3'-phosphoadenylyl sulfate is bound by residues Tyr-170 and 215 to 224 (SASQVKNSIN).

It belongs to the protein sulfotransferase family.

The catalysed reaction is L-tyrosyl-[protein] + 3'-phosphoadenylyl sulfate = O-sulfo-L-tyrosine-[protein] + adenosine 3',5'-bisphosphate + H(+). Its function is as follows. Catalyzes the O-sulfation of tyrosine residues within acidic motifs of polypeptides, using 3'-phosphoadenylyl sulfate (PAPS) as cosubstrate. The polypeptide is Putative protein-tyrosine sulfotransferase (Caenorhabditis briggsae).